Here is a 301-residue protein sequence, read N- to C-terminus: Triplex capsid protein 2 (301 aa).

It belongs to the herpesviridae TRX2 protein family. Interacts with TRX1 and major capisd protein/MCP.

Its subcellular location is the virion. The protein localises to the host nucleus. Structural component of the T=16 icosahedral capsid. The capsid is composed of pentamers and hexamers of major capsid protein/MCP, which are linked together by heterotrimers called triplexes. These triplexes are formed by a single molecule of triplex protein 1/TRX1 and two copies of triplex protein 2/TRX2. Additionally, TRX1 is required for efficient transport of TRX2 to the nucleus, which is the site of capsid assembly. This is Triplex capsid protein 2 from Homo sapiens (Human).